Here is a 161-residue protein sequence, read N- to C-terminus: Cyclic pyranopterin monophosphate synthase (161 aa).

Substrate contacts are provided by residues 73 to 75 and 110 to 111; these read LCH and ME. The active site involves D125.

It belongs to the MoaC family. Homohexamer; trimer of dimers.

The enzyme catalyses (8S)-3',8-cyclo-7,8-dihydroguanosine 5'-triphosphate = cyclic pyranopterin phosphate + diphosphate. It functions in the pathway cofactor biosynthesis; molybdopterin biosynthesis. Catalyzes the conversion of (8S)-3',8-cyclo-7,8-dihydroguanosine 5'-triphosphate to cyclic pyranopterin monophosphate (cPMP). This chain is Cyclic pyranopterin monophosphate synthase, found in Pseudomonas savastanoi pv. phaseolicola (strain 1448A / Race 6) (Pseudomonas syringae pv. phaseolicola (strain 1448A / Race 6)).